Here is a 309-residue protein sequence, read N- to C-terminus: Elongator complex protein 5 (309 aa).

S3 and S4 each carry phosphoserine.

It belongs to the ELP5 family. Component of the elongator complex, which consists of ELP1/IKI3, ELP2, ELP3, ELP4, ELP5/IKI1 and ELP6. The elongator complex is composed of two copies of the Elp123 subcomplex (composed of ELP1/IKI3, ELP2 and ELP3) and two copies of the Elp456 subcomplex (composed of ELP4, ELP5/IKI1 and ELP6). The Elp123 subcomplex forms a two-lobed scaffold, which binds the Elp456 subcomplex asymmetrically. In each lobe, ELP2 is tightly sandwiched between ELP1/IKI3 and ELP3. The Elp123 subcomplex binds tRNA through ELP1/IKI3 and ELP3 and can bind 2 tRNAs simultaneously. tRNA-binding by the Elp123 subcomplex induces conformational rearrangements which precisely position the targeted anticodon base in the active site. The Elp456 subcomplex binds tRNA and has ATPase activity. Interacts with KTI11/DPH3.

The protein localises to the cytoplasm. Its subcellular location is the nucleus. It functions in the pathway tRNA modification; 5-methoxycarbonylmethyl-2-thiouridine-tRNA biosynthesis. Component of the elongator complex which is required for multiple tRNA modifications, including mcm5U (5-methoxycarbonylmethyl uridine), mcm5s2U (5-methoxycarbonylmethyl-2-thiouridine), and ncm5U (5-carbamoylmethyl uridine). The elongator complex catalyzes formation of carboxymethyluridine in the wobble base at position 34 in tRNAs. It functions as a gamma-toxin target (TOT); disruption of the complex confers resistance to Kluyveromyces lactis toxin zymocin (pGKL1 killer toxin). May also be involved in sensitivity to Pichia inositovora toxin. This chain is Elongator complex protein 5 (IKI1), found in Saccharomyces cerevisiae (strain ATCC 204508 / S288c) (Baker's yeast).